We begin with the raw amino-acid sequence, 353 residues long: Histidinol-phosphate aminotransferase 1 (353 aa).

The residue at position 211 (lysine 211) is an N6-(pyridoxal phosphate)lysine.

It belongs to the class-II pyridoxal-phosphate-dependent aminotransferase family. Histidinol-phosphate aminotransferase subfamily. In terms of assembly, homodimer. Pyridoxal 5'-phosphate serves as cofactor.

It carries out the reaction L-histidinol phosphate + 2-oxoglutarate = 3-(imidazol-4-yl)-2-oxopropyl phosphate + L-glutamate. The protein operates within amino-acid biosynthesis; L-histidine biosynthesis; L-histidine from 5-phospho-alpha-D-ribose 1-diphosphate: step 7/9. The chain is Histidinol-phosphate aminotransferase 1 (hisC1) from Nostoc sp. (strain PCC 7120 / SAG 25.82 / UTEX 2576).